The primary structure comprises 172 residues: Disulfide bond formation protein B (172 aa).

The Cytoplasmic segment spans residues 1–16; it reads MNLFASLNQFSKNRIS. The chain crosses the membrane as a helical span at residues 17 to 33; it reads WLLLLLFVVFFEGAALF. The Periplasmic segment spans residues 34–51; the sequence is FQHVMMLSPCVMCIYERV. A disulfide bond links Cys43 and Cys46. The helical transmembrane segment at 52-67 threads the bilayer; that stretch reads AMLGVGGAALFGLIAP. At 68–74 the chain is on the cytoplasmic side; it reads NNPLVRW. The helical transmembrane segment at 75-92 threads the bilayer; the sequence is LGLAAWGASAYKGLALSL. Over 93–147 the chain is Periplasmic; that stretch reads QHVDYQFNPSPFATCDLFVTFPDWAPLNQWAPWMFEAYGDCSKIVWQFMTLSMPQ. An intrachain disulfide couples Cys107 to Cys133. Residues 148 to 166 traverse the membrane as a helical segment; that stretch reads WLVIIFAGNLVALAFIVIA. The Cytoplasmic portion of the chain corresponds to 167 to 172; the sequence is QFFKSK.

This sequence belongs to the DsbB family.

It localises to the cell inner membrane. Its function is as follows. Required for disulfide bond formation in some periplasmic proteins. Acts by oxidizing the DsbA protein. In Vibrio vulnificus (strain CMCP6), this protein is Disulfide bond formation protein B.